The sequence spans 478 residues: NAD(+) hydrolase ThsA (478 aa).

Positions 1 to 287 (MDKKVLIKRF…SIRKKYLRKT (287 aa)) constitute a Deacetylase sirtuin-type domain. NAD(+) is bound by residues alanine 19, aspartate 110, and histidine 148. The active-site Proton acceptor is histidine 148. Positions 288-478 (IFISGSAVDY…VSLINSIQED (191 aa)) are SLOG (STALD) domain. 3'cADPR contacts are provided by glycine 292, serine 293, leucine 330, arginine 373, lysine 390, glycine 401, and glutamate 405.

Belongs to the soluble Thoeris ThsA family. Homotetramer in solution.

It catalyses the reaction NAD(+) + H2O = ADP-D-ribose + nicotinamide + H(+). Its activity is regulated as follows. Activated by 3'cADPR. In terms of biological role, NAD(+) hydrolyzing component (NADase) of the Thoeris antiviral defense system, composed of ThsA and ThsB (maybe AS248_15445). Activated by 3' cyclic ADP-D-ribose (3'cADPR) but not its isomers 2'cADPR, cADPR and very weakly by ADPR; binds 3'cADPR better than 2'cADPR. Upon activation binds and hydrolyzes NAD(+), leading to cell death and inhibition of phage replication. This Enterococcus faecium (Streptococcus faecium) protein is NAD(+) hydrolase ThsA.